The chain runs to 126 residues: Urease subunit beta (126 aa).

This sequence belongs to the urease beta subunit family. As to quaternary structure, heterotrimer of UreA (gamma), UreB (beta) and UreC (alpha) subunits. Three heterotrimers associate to form the active enzyme.

It is found in the cytoplasm. The enzyme catalyses urea + 2 H2O + H(+) = hydrogencarbonate + 2 NH4(+). Its pathway is nitrogen metabolism; urea degradation; CO(2) and NH(3) from urea (urease route): step 1/1. The sequence is that of Urease subunit beta from Frankia casuarinae (strain DSM 45818 / CECT 9043 / HFP020203 / CcI3).